The chain runs to 314 residues: Polyamine aminopropyltransferase (314 aa).

Positions 13 to 249 (WSWFLEWLTP…SMWGFVVASD (237 aa)) constitute a PABS domain. Glutamine 42 contacts S-methyl-5'-thioadenosine. Histidine 73 and glutamate 97 together coordinate spermidine. S-methyl-5'-thioadenosine-binding positions include aspartate 117 and 149–150 (DA). Aspartate 168 serves as the catalytic Proton acceptor. Proline 177 provides a ligand contact to S-methyl-5'-thioadenosine.

It belongs to the spermidine/spermine synthase family. In terms of assembly, homodimer or homotetramer.

The protein localises to the cytoplasm. It carries out the reaction S-adenosyl 3-(methylsulfanyl)propylamine + putrescine = S-methyl-5'-thioadenosine + spermidine + H(+). Its pathway is amine and polyamine biosynthesis; spermidine biosynthesis; spermidine from putrescine: step 1/1. Functionally, catalyzes the irreversible transfer of a propylamine group from the amino donor S-adenosylmethioninamine (decarboxy-AdoMet) to putrescine (1,4-diaminobutane) to yield spermidine. The chain is Polyamine aminopropyltransferase from Aeropyrum pernix (strain ATCC 700893 / DSM 11879 / JCM 9820 / NBRC 100138 / K1).